The chain runs to 203 residues: Guanylate kinase (203 aa).

The Guanylate kinase-like domain maps to 3 to 181; the sequence is GTLYIVAAPS…AVSEMCAIFT (179 aa). 10-17 is an ATP binding site; sequence APSGAGKS.

It belongs to the guanylate kinase family.

It is found in the cytoplasm. It catalyses the reaction GMP + ATP = GDP + ADP. In terms of biological role, essential for recycling GMP and indirectly, cGMP. The polypeptide is Guanylate kinase (Xanthomonas campestris pv. campestris (strain 8004)).